Consider the following 98-residue polypeptide: C-X-C motif chemokine 10 (98 aa).

A signal peptide spans 1 to 21 (MNQTAILICCLVFLTLSGIQG). R26 bears the Citrulline mark. 2 disulfide bridges follow: C30–C57 and C32–C74.

This sequence belongs to the intercrine alpha (chemokine CxC) family.

The protein localises to the secreted. In terms of biological role, chemotactic for monocytes and T-lymphocytes. Binds to CXCR3. The protein is C-X-C motif chemokine 10 (CXCL10) of Macaca nemestrina (Pig-tailed macaque).